Consider the following 478-residue polypeptide: Membrane-bound lytic murein transglycosylase F (478 aa).

A signal peptide spans 1 to 22 (MTRFLFAIILGLLLTACQQETV). A non-LT domain region spans residues 23–257 (EETEFVPHKL…HLNEKYFGHV (235 aa)). The LT domain stretch occupies residues 258–478 (KRFDYIDTRA…PGTLSPDKPK (221 aa)). The active site involves glutamate 302. Residues 447–478 (KQQNSEEVAPSDLTAEETPVPAPGTLSPDKPK) are disordered.

The protein in the N-terminal section; belongs to the bacterial solute-binding protein 3 family. It in the C-terminal section; belongs to the transglycosylase Slt family.

Its subcellular location is the cell outer membrane. The enzyme catalyses Exolytic cleavage of the (1-&gt;4)-beta-glycosidic linkage between N-acetylmuramic acid (MurNAc) and N-acetylglucosamine (GlcNAc) residues in peptidoglycan, from either the reducing or the non-reducing ends of the peptidoglycan chains, with concomitant formation of a 1,6-anhydrobond in the MurNAc residue.. Its function is as follows. Murein-degrading enzyme that degrades murein glycan strands and insoluble, high-molecular weight murein sacculi, with the concomitant formation of a 1,6-anhydromuramoyl product. Lytic transglycosylases (LTs) play an integral role in the metabolism of the peptidoglycan (PG) sacculus. Their lytic action creates space within the PG sacculus to allow for its expansion as well as for the insertion of various structures such as secretion systems and flagella. The polypeptide is Membrane-bound lytic murein transglycosylase F (Shewanella oneidensis (strain ATCC 700550 / JCM 31522 / CIP 106686 / LMG 19005 / NCIMB 14063 / MR-1)).